A 248-amino-acid polypeptide reads, in one-letter code: Short-chain dehydrogenase/reductase iacG (248 aa).

6 residues coordinate NADP(+): I14, N35, K41, D58, R120, and V187.

This sequence belongs to the short-chain dehydrogenases/reductases (SDR) family.

Its pathway is secondary metabolite biosynthesis. Short-chain dehydrogenase/reductase; part of the gene cluster that mediates the biosynthesis of iso-A82775C, a enylepoxycyclohexane and biosynthetic precursor of the chloropestolide anticancer natural products. Within the cluster, the prenyltransferase iacE prenylates siccayne to generate pestalodiol E, using dimethylallyl diphosphate (DMAPP) as cosubstrate. The probable oxidoreductase iacF is then involved in the epoxidation of pestalodiol F to pestalodiol F, which is further converted to pestalofone A by the short-chain dehydrogenase/reductase iacG. Iso-A82775C is subsequently generated from pestalofone A by the short-chain dehydrogenase/reductase iacC. Iso-A82775C is further condensed with maldoxin via a Diels-Alder reaction to produce the anticancer natural products chloropestolides A to E. This Pestalotiopsis fici (strain W106-1 / CGMCC3.15140) protein is Short-chain dehydrogenase/reductase iacG.